The primary structure comprises 251 residues: Developmental protein SEPALLATA 3 (251 aa).

The 55-residue stretch at 3–57 (RGRVELKRIENKINRQVTFAKRRNGLLKKAYELSVLCDAEVALIIFSNRGKLYEF) folds into the MADS-box domain. Residues 91 to 181 (ELSSQQEYLK…RLRLADGYQM (91 aa)) enclose the K-box domain. Residues 94 to 177 (SQQEYLKLKE…NKTLRLRLAD (84 aa)) adopt a coiled-coil conformation.

Forms homodimers. Heterodimer with AP1 or AG capable of binding to CArG-box sequences. Binds AP3/PI to form a ternary complex. Interacts with AGL16. Interacts with TT16/AGL32.

It localises to the nucleus. In terms of biological role, probable transcription factor active in inflorescence development and floral organogenesis. Functions with SEPALLATA1/AGL2 and SEPALLATA2/AGL4 to ensure proper development of petals, stamens and carpels and to prevent the indeterminate growth of the flower meristem. Interacts with APETALA1, AGAMOUS or APETALA3/PISTILLATA to form complexes, that could be involved in genes regulation during floral meristem development. Binds specifically to the CArG box DNA sequence 5'-CC (A/T)6 GG-3'. The protein is Developmental protein SEPALLATA 3 (SEP3) of Arabidopsis thaliana (Mouse-ear cress).